The following is a 430-amino-acid chain: Lipoyl synthase, mitochondrial (430 aa).

A mitochondrion-targeting transit peptide spans 1–37 (MATSAGKLRTLYSAHSSLSSLPPSARPTLQLATLRSY). The span at 39–55 (TTTPHDSPIGNTSNTPP) shows a compositional bias: polar residues. The segment at 39–59 (TTTPHDSPIGNTSNTPPTVKR) is disordered. C141, C146, C152, C172, C176, C179, and S387 together coordinate [4Fe-4S] cluster. One can recognise a Radical SAM core domain in the interval 155 to 376 (GSSKSAATAT…KERALEMGFL (222 aa)).

It belongs to the radical SAM superfamily. Lipoyl synthase family. [4Fe-4S] cluster serves as cofactor.

It is found in the mitochondrion. The enzyme catalyses [[Fe-S] cluster scaffold protein carrying a second [4Fe-4S](2+) cluster] + N(6)-octanoyl-L-lysyl-[protein] + 2 oxidized [2Fe-2S]-[ferredoxin] + 2 S-adenosyl-L-methionine + 4 H(+) = [[Fe-S] cluster scaffold protein] + N(6)-[(R)-dihydrolipoyl]-L-lysyl-[protein] + 4 Fe(3+) + 2 hydrogen sulfide + 2 5'-deoxyadenosine + 2 L-methionine + 2 reduced [2Fe-2S]-[ferredoxin]. It participates in protein modification; protein lipoylation via endogenous pathway; protein N(6)-(lipoyl)lysine from octanoyl-[acyl-carrier-protein]: step 2/2. Its function is as follows. Catalyzes the radical-mediated insertion of two sulfur atoms into the C-6 and C-8 positions of the octanoyl moiety bound to the lipoyl domains of lipoate-dependent enzymes, thereby converting the octanoylated domains into lipoylated derivatives. The protein is Lipoyl synthase, mitochondrial of Ajellomyces capsulatus (strain H143) (Darling's disease fungus).